The primary structure comprises 102 residues: N(4)-acetylcytidine amidohydrolase (102 aa).

Residues Thr6–Asp92 form the ASCH domain. Residue Lys20 is the Proton acceptor of the active site. Thr23 functions as the Nucleophile in the catalytic mechanism. Catalysis depends on Glu73, which acts as the Proton donor.

Belongs to the N(4)-acetylcytidine amidohydrolase family.

The catalysed reaction is N(4)-acetylcytidine + H2O = cytidine + acetate + H(+). It catalyses the reaction N(4)-acetyl-2'-deoxycytidine + H2O = 2'-deoxycytidine + acetate + H(+). It carries out the reaction N(4)-acetylcytosine + H2O = cytosine + acetate + H(+). In terms of biological role, catalyzes the hydrolysis of N(4)-acetylcytidine (ac4C). This chain is N(4)-acetylcytidine amidohydrolase, found in Yersinia pseudotuberculosis serotype O:1b (strain IP 31758).